The chain runs to 259 residues: Trans-4-hydroxycyclohexanecarboxylate dehydrogenase (259 aa).

The NAD(+) site is built by R20, M22, D41, D73, V74, N100, Y164, K168, V197, T199, and T202. Y164 serves as the catalytic Proton acceptor.

The protein belongs to the short-chain dehydrogenases/reductases (SDR) family. In terms of assembly, homodimer. Homotetramer.

The enzyme catalyses trans-4-hydroxycyclohexane-1-carboxylate + NAD(+) = 4-oxocyclohexane-1-carboxylate + NADH + H(+). Strongly inhibited by N-bromosuccinimide. Not inhibited by sulfhydryl reagents, such as iodoacetic acid, iodoacetamide, N-ethylmaleimide and p-hydroxymercuribenzoic acid. Dehydrogenase involved in a cyclohexanecarboxylate (CHCA) degradation pathway. Catalyzes the NAD(+)-dependent dehydrogenation of trans-4-hydroxycyclohexanecarboxylate (trans-4-hydroxyCHCA) to form 4-oxocyclohexanecarboxylate (4-oxoCHCA). Is highly specific for the trans-4-hydroxy derivative and shows only weak activity with cis-4-hydroxyCHCA. Can also catalyze the reverse reaction (4-oxoCHCA reduction) with a higher catalytic efficiency. In the reverse reaction, is highly specific for 4-oxoCHCA and cannot use either the 2-oxo or the 3-oxo homolog as substrate. Cannot use NADP(+). This Sinomonas cyclohexanicum (Corynebacterium cyclohexanicum) protein is Trans-4-hydroxycyclohexanecarboxylate dehydrogenase.